The chain runs to 503 residues: Probable cytosol aminopeptidase (503 aa).

2 residues coordinate Mn(2+): Lys268 and Asp273. Residue Lys280 is part of the active site. Asp291, Asp350, and Glu352 together coordinate Mn(2+). Residue Arg354 is part of the active site.

The protein belongs to the peptidase M17 family. It depends on Mn(2+) as a cofactor.

The protein localises to the cytoplasm. It catalyses the reaction Release of an N-terminal amino acid, Xaa-|-Yaa-, in which Xaa is preferably Leu, but may be other amino acids including Pro although not Arg or Lys, and Yaa may be Pro. Amino acid amides and methyl esters are also readily hydrolyzed, but rates on arylamides are exceedingly low.. It carries out the reaction Release of an N-terminal amino acid, preferentially leucine, but not glutamic or aspartic acids.. Functionally, presumably involved in the processing and regular turnover of intracellular proteins. Catalyzes the removal of unsubstituted N-terminal amino acids from various peptides. In Corynebacterium efficiens (strain DSM 44549 / YS-314 / AJ 12310 / JCM 11189 / NBRC 100395), this protein is Probable cytosol aminopeptidase.